The following is a 228-amino-acid chain: Uracil-DNA glycosylase (228 aa).

The active-site Proton acceptor is D71.

Belongs to the uracil-DNA glycosylase (UDG) superfamily. UNG family.

The protein resides in the cytoplasm. It catalyses the reaction Hydrolyzes single-stranded DNA or mismatched double-stranded DNA and polynucleotides, releasing free uracil.. Excises uracil residues from the DNA which can arise as a result of misincorporation of dUMP residues by DNA polymerase or due to deamination of cytosine. This chain is Uracil-DNA glycosylase, found in Thermobifida fusca (strain YX).